Reading from the N-terminus, the 736-residue chain is uncharacterized protein (736 aa).

ABC transporter domains follow at residues 183–459 and 518–734; these read IKID…KQME and LQMS…TMTI. ATP is bound by residues 215-222 and 551-558; these read GRNGIGKS and GPNGAGKS.

Belongs to the ABC transporter superfamily.

The protein localises to the cytoplasm. This is an uncharacterized protein from Schizosaccharomyces pombe (strain 972 / ATCC 24843) (Fission yeast).